A 493-amino-acid polypeptide reads, in one-letter code: ATP synthase subunit beta, chloroplastic (493 aa).

Residue 170-177 (GGAGVGKT) participates in ATP binding.

This sequence belongs to the ATPase alpha/beta chains family. F-type ATPases have 2 components, CF(1) - the catalytic core - and CF(0) - the membrane proton channel. CF(1) has five subunits: alpha(3), beta(3), gamma(1), delta(1), epsilon(1). CF(0) has four main subunits: a(1), b(1), b'(1) and c(9-12).

The protein resides in the plastid. The protein localises to the chloroplast thylakoid membrane. The enzyme catalyses ATP + H2O + 4 H(+)(in) = ADP + phosphate + 5 H(+)(out). Its function is as follows. Produces ATP from ADP in the presence of a proton gradient across the membrane. The catalytic sites are hosted primarily by the beta subunits. In Chaetosphaeridium globosum (Charophycean green alga), this protein is ATP synthase subunit beta, chloroplastic.